A 295-amino-acid polypeptide reads, in one-letter code: Ribosomal RNA small subunit methyltransferase A (295 aa).

The S-adenosyl-L-methionine site is built by asparagine 29, leucine 31, glycine 56, glutamate 77, aspartate 102, and asparagine 128.

The protein belongs to the class I-like SAM-binding methyltransferase superfamily. rRNA adenine N(6)-methyltransferase family. RsmA subfamily.

The protein localises to the cytoplasm. The catalysed reaction is adenosine(1518)/adenosine(1519) in 16S rRNA + 4 S-adenosyl-L-methionine = N(6)-dimethyladenosine(1518)/N(6)-dimethyladenosine(1519) in 16S rRNA + 4 S-adenosyl-L-homocysteine + 4 H(+). Specifically dimethylates two adjacent adenosines (A1518 and A1519) in the loop of a conserved hairpin near the 3'-end of 16S rRNA in the 30S particle. May play a critical role in biogenesis of 30S subunits. The chain is Ribosomal RNA small subunit methyltransferase A from Listeria monocytogenes serotype 4a (strain HCC23).